A 474-amino-acid chain; its full sequence is Shufflon protein A (474 aa).

The constant region stretch occupies residues 1–361 (MKKYDRGWAS…TGAILSCQSG (361 aa)). The variable region stretch occupies residues 362-474 (TWKTSGSLNG…GVFSVFGYQT (113 aa)).

This is Shufflon protein A from Escherichia coli.